The sequence spans 535 residues: Light-independent protochlorophyllide reductase subunit B (535 aa).

A [4Fe-4S] cluster-binding site is contributed by Asp-36. The active-site Proton donor is the Asp-292. 428–429 is a binding site for substrate; the sequence is GL. The interval 447 to 483 is disordered; the sequence is SDDAAKAEPDQPVSNAHGHTESKTVSQGEPIASDEGG.

It belongs to the ChlB/BchB/BchZ family. As to quaternary structure, protochlorophyllide reductase is composed of three subunits; BchL, BchN and BchB. Forms a heterotetramer of two BchB and two BchN subunits. Requires [4Fe-4S] cluster as cofactor.

It carries out the reaction chlorophyllide a + oxidized 2[4Fe-4S]-[ferredoxin] + 2 ADP + 2 phosphate = protochlorophyllide a + reduced 2[4Fe-4S]-[ferredoxin] + 2 ATP + 2 H2O. The protein operates within porphyrin-containing compound metabolism; bacteriochlorophyll biosynthesis (light-independent). Component of the dark-operative protochlorophyllide reductase (DPOR) that uses Mg-ATP and reduced ferredoxin to reduce ring D of protochlorophyllide (Pchlide) to form chlorophyllide a (Chlide). This reaction is light-independent. The NB-protein (BchN-BchB) is the catalytic component of the complex. The sequence is that of Light-independent protochlorophyllide reductase subunit B from Chlorobium phaeobacteroides (strain DSM 266 / SMG 266 / 2430).